Reading from the N-terminus, the 306-residue chain is Palmitoyl-protein thioesterase 1 (306 aa).

A signal peptide spans 1–27 (MASSCSRRLLAAALLPWCCAAWALGHL). Intrachain disulfides connect C45–C46, C96–C128, and C152–C160. Residue S115 is part of the active site. N-linked (GlcNAc...) asparagine glycans are attached at residues N197, N212, and N232. Residues D233 and H289 contribute to the active site.

This sequence belongs to the palmitoyl-protein thioesterase family. Interacts with CLN5, ATP5F1A and ATP5F1B. Post-translationally, glycosylated. As to expression, highest level in testis and kidney, lower in heart, brain and lung and lowest in skeletal muscle.

Its subcellular location is the lysosome. It localises to the secreted. The protein resides in the golgi apparatus. The protein localises to the endoplasmic reticulum. The enzyme catalyses S-hexadecanoyl-L-cysteinyl-[protein] + H2O = L-cysteinyl-[protein] + hexadecanoate + H(+). The catalysed reaction is hexadecanoyl-CoA + H2O = hexadecanoate + CoA + H(+). It catalyses the reaction S-hexadecanoyl-N-acetylcysteamine + H2O = N-acetylcysteamine + hexadecanoate + H(+). It carries out the reaction S-hexadecanoyl-N-acetylcysteine methyl ester + H2O = N-acetylcysteine methyl ester + hexadecanoate + H(+). Functionally, has thioesterase activity against fatty acid thioesters with 14 -18 carbons, including palmitoyl-CoA, S-palmitoyl-N-acetylcysteamine, and palmitoylated proteins. In contrast to PPT2, PPT1 can hydrolyze palmitoylated proteins and palmitoylcysteine. The sequence is that of Palmitoyl-protein thioesterase 1 (Ppt1) from Mus musculus (Mouse).